The following is a 675-amino-acid chain: Putative exonuclease GOR (675 aa).

Residues 66 to 79 show a composition bias toward basic and acidic residues; sequence VAKEAAPEASRHLG. Disordered stretches follow at residues 66 to 90 and 225 to 263; these read VAKE…APEG and AKRT…TATT. Positions 358-483 are GOR1-125 epitope; it reads MPGLSRAALY…VRDGRKESLD (126 aa).

Belongs to the REXO1/REXO3 family.

Its subcellular location is the cytoplasm. It is found in the nucleus. The chain is Putative exonuclease GOR (REXO1L1P) from Homo sapiens (Human).